The primary structure comprises 420 residues: Tyrosine--tRNA ligase (420 aa).

Tyrosine 36 serves as a coordination point for L-tyrosine. A 'HIGH' region motif is present at residues 41 to 50 (PTADSLHIGH). Tyrosine 170 and glutamine 174 together coordinate L-tyrosine. Positions 231–235 (KFGKS) match the 'KMSKS' region motif. Lysine 234 provides a ligand contact to ATP. The region spanning 353-420 (SNIIDVLIET…KKKYFMVNYK (68 aa)) is the S4 RNA-binding domain.

It belongs to the class-I aminoacyl-tRNA synthetase family. TyrS type 1 subfamily. As to quaternary structure, homodimer.

The protein resides in the cytoplasm. It catalyses the reaction tRNA(Tyr) + L-tyrosine + ATP = L-tyrosyl-tRNA(Tyr) + AMP + diphosphate + H(+). Its function is as follows. Catalyzes the attachment of tyrosine to tRNA(Tyr) in a two-step reaction: tyrosine is first activated by ATP to form Tyr-AMP and then transferred to the acceptor end of tRNA(Tyr). The protein is Tyrosine--tRNA ligase of Staphylococcus haemolyticus (strain JCSC1435).